The sequence spans 317 residues: Lipoyl synthase (317 aa).

Positions 59, 64, 70, 85, 89, 92, and 298 each coordinate [4Fe-4S] cluster. Residues 71–287 (WSQRHASFMI…AKIGKAKGFL (217 aa)) enclose the Radical SAM core domain.

The protein belongs to the radical SAM superfamily. Lipoyl synthase family. It depends on [4Fe-4S] cluster as a cofactor.

The protein resides in the cytoplasm. The catalysed reaction is [[Fe-S] cluster scaffold protein carrying a second [4Fe-4S](2+) cluster] + N(6)-octanoyl-L-lysyl-[protein] + 2 oxidized [2Fe-2S]-[ferredoxin] + 2 S-adenosyl-L-methionine + 4 H(+) = [[Fe-S] cluster scaffold protein] + N(6)-[(R)-dihydrolipoyl]-L-lysyl-[protein] + 4 Fe(3+) + 2 hydrogen sulfide + 2 5'-deoxyadenosine + 2 L-methionine + 2 reduced [2Fe-2S]-[ferredoxin]. It functions in the pathway protein modification; protein lipoylation via endogenous pathway; protein N(6)-(lipoyl)lysine from octanoyl-[acyl-carrier-protein]: step 2/2. In terms of biological role, catalyzes the radical-mediated insertion of two sulfur atoms into the C-6 and C-8 positions of the octanoyl moiety bound to the lipoyl domains of lipoate-dependent enzymes, thereby converting the octanoylated domains into lipoylated derivatives. This chain is Lipoyl synthase, found in Bartonella bacilliformis (strain ATCC 35685 / KC583 / Herrer 020/F12,63).